The primary structure comprises 118 residues: Protein RALF-like 24 (118 aa).

The first 22 residues, 1 to 22, serve as a signal peptide directing secretion; sequence MSRSLALVYLSLLCLQTHLSIS. Residues 23–63 constitute a propeptide, removed in mature form; sequence VTVPIPSVNGEIDAMLNRNGVIGEEEGEEMMPSEISRRVMM. Intrachain disulfides connect C81/C91 and C103/C109.

The protein belongs to the plant rapid alkalinization factor (RALF) family. In terms of processing, proteolytically cleaved, probably by S1P, a subtilisin-like serine protease (subtilase).

The protein localises to the secreted. In terms of biological role, cell signaling peptide that may regulate plant stress, growth, and development. Mediates a rapid alkalinization of extracellular space by mediating a transient increase in the cytoplasmic Ca(2+) concentration leading to a calcium-dependent signaling events through a cell surface receptor and a concomitant activation of some intracellular mitogen-activated protein kinases. This Arabidopsis thaliana (Mouse-ear cress) protein is Protein RALF-like 24 (RALFL24).